Consider the following 97-residue polypeptide: Apolipoprotein C-II (97 aa).

The first 22 residues, 1–22 (MGSRFFLALFLALLVLGNEVQG), serve as a signal peptide directing secretion. The segment at 63–71 (SVDEKLRDM) is lipid binding. Residues 75-97 (SSAAMTTYAGIFTDQLLTLLKGE) form a lipoprotein lipase cofactor region.

This sequence belongs to the apolipoprotein C2 family. Proapolipoprotein C-II is synthesized as a sialic acid containing glycoprotein which is subsequently desialylated prior to its proteolytic processing. Post-translationally, proapolipoprotein C-II, the major form found in plasma undergoes proteolytic cleavage of its N-terminal hexapeptide to generate the mature form apolipoprotein C-II, which occurs as the minor form in plasma.

The protein localises to the secreted. Component of chylomicrons, very low-density lipoproteins (VLDL), low-density lipoproteins (LDL), and high-density lipoproteins (HDL) in plasma. Plays an important role in lipoprotein metabolism as an activator of lipoprotein lipase. In Rattus norvegicus (Rat), this protein is Apolipoprotein C-II (Apoc2).